The chain runs to 380 residues: O-phospho-L-seryl-tRNA:Cys-tRNA synthase (380 aa).

Pyridoxal 5'-phosphate is bound by residues 86-87, asparagine 192, and 215-217; these read AR and SGH. Lysine 218 is modified (N6-(pyridoxal phosphate)lysine).

Belongs to the SepCysS family. As to quaternary structure, homodimer. Interacts with SepRS. Pyridoxal 5'-phosphate serves as cofactor.

It catalyses the reaction O-phospho-L-seryl-tRNA(Cys) + hydrogen sulfide + H(+) = L-cysteinyl-tRNA(Cys) + phosphate. Converts O-phospho-L-seryl-tRNA(Cys) (Sep-tRNA(Cys)) to L-cysteinyl-tRNA(Cys) (Cys-tRNA(Cys)). In Methanococcus maripaludis (strain DSM 14266 / JCM 13030 / NBRC 101832 / S2 / LL), this protein is O-phospho-L-seryl-tRNA:Cys-tRNA synthase.